Consider the following 209-residue polypeptide: Ribosomal RNA large subunit methyltransferase E (209 aa).

G63, W65, D83, D99, and D124 together coordinate S-adenosyl-L-methionine. K164 acts as the Proton acceptor in catalysis.

It belongs to the class I-like SAM-binding methyltransferase superfamily. RNA methyltransferase RlmE family.

The protein resides in the cytoplasm. It catalyses the reaction uridine(2552) in 23S rRNA + S-adenosyl-L-methionine = 2'-O-methyluridine(2552) in 23S rRNA + S-adenosyl-L-homocysteine + H(+). Specifically methylates the uridine in position 2552 of 23S rRNA at the 2'-O position of the ribose in the fully assembled 50S ribosomal subunit. The chain is Ribosomal RNA large subunit methyltransferase E from Shewanella frigidimarina (strain NCIMB 400).